Here is a 273-residue protein sequence, read N- to C-terminus: Urease accessory protein UreD (273 aa).

The protein belongs to the UreD family. As to quaternary structure, ureD, UreF and UreG form a complex that acts as a GTP-hydrolysis-dependent molecular chaperone, activating the urease apoprotein by helping to assemble the nickel containing metallocenter of UreC. The UreE protein probably delivers the nickel.

It is found in the cytoplasm. Functionally, required for maturation of urease via the functional incorporation of the urease nickel metallocenter. This Rhizobium leguminosarum bv. viciae protein is Urease accessory protein UreD.